We begin with the raw amino-acid sequence, 455 residues long: La-related protein 6C (455 aa).

Residues 1–20 (MAQMQREEVESVTTEKKRLD) are compositionally biased toward basic and acidic residues. The segment at 1 to 29 (MAQMQREEVESVTTEKKRLDGGGGSSGAQ) is disordered. The HTH La-type RNA-binding domain occupies 138–229 (NLLSDDLRLK…KRTSQFTDRD (92 aa)). The region spanning 236 to 324 (RTVVAENLPD…KGLRVRLLLR (89 aa)) is the RRM domain. Disordered stretches follow at residues 348-396 (SYES…YAVG) and 414-455 (SLGS…PNNL).

The protein localises to the nucleus. In terms of biological role, transcriptional regulator. In Arabidopsis thaliana (Mouse-ear cress), this protein is La-related protein 6C (LARP6C).